Here is an 85-residue protein sequence, read N- to C-terminus: uncharacterized protein (85 aa).

Helical transmembrane passes span 13–35 (KWLA…FQPL) and 59–81 (EGIV…HLLL).

It localises to the cell membrane. This is an uncharacterized protein from Archaeoglobus fulgidus (strain ATCC 49558 / DSM 4304 / JCM 9628 / NBRC 100126 / VC-16).